A 179-amino-acid polypeptide reads, in one-letter code: MSLKNRYRETIRPKLLKDLGFSNLHQVPKVVKINVNRGLGEAAQNSKALEASLSEVSTITGQKALVTRAKKAIAGFKIRQGMPIGCAVTLRGERMYAFLERLINLALPRIRDFRGVSPKSFDGRGNFTLGVKEQLIFPEISFDKIDAIRGMDITIVTSARTDEEGRALLKEMGMPFRSN.

The protein belongs to the universal ribosomal protein uL5 family. As to quaternary structure, part of the 50S ribosomal subunit; part of the 5S rRNA/L5/L18/L25 subcomplex. Contacts the 5S rRNA and the P site tRNA. Forms a bridge to the 30S subunit in the 70S ribosome.

Its function is as follows. This is one of the proteins that bind and probably mediate the attachment of the 5S RNA into the large ribosomal subunit, where it forms part of the central protuberance. In the 70S ribosome it contacts protein S13 of the 30S subunit (bridge B1b), connecting the 2 subunits; this bridge is implicated in subunit movement. Contacts the P site tRNA; the 5S rRNA and some of its associated proteins might help stabilize positioning of ribosome-bound tRNAs. The sequence is that of Large ribosomal subunit protein uL5 from Prochlorococcus marinus (strain SARG / CCMP1375 / SS120).